The primary structure comprises 431 residues: MDLHVGKSRGLRGTVAVPGDKSISHRAVMLGALASGETIIENFLPGEDCLSTIDCFRKLGVEINGPDNNTVRVRGRGLDGLSEPVDVLDTGNSGTTMRLILGVLAGQPFFSVITGDSSLRRRPMGRVTGPLISMGAKIDGRQNGNLAPLAVRGGTLRPINFVSPVASAQVKSAVLLAGLFTDGVTAVTEAYRTRDHTERMLRAFGAGVEVSEGTVAVKGRPRLTGRKVKVPGDISSAAFLLVAASLIPGSDLTLTGVGVNPTRIGIIEVLSSMGAEIRLFNLREEEEPVADIRVRYNGRLCGTAVGGEIIPRLIDEVPALAVAAALAEGKTVIRDAAELKVKESDRIAAVAGMLAKFGADVEELPDGLLVRGSRALKGCVCESHGDHRIAMAAAVAGLLAEGKTIVRGAECISVSFPGFSDLLAKVMVDWQ.

Residues lysine 21, serine 22, and arginine 26 each contribute to the 3-phosphoshikimate site. Lysine 21 serves as a coordination point for phosphoenolpyruvate. Phosphoenolpyruvate is bound by residues glycine 94 and arginine 122. Positions 167, 169, 315, and 342 each coordinate 3-phosphoshikimate. A phosphoenolpyruvate-binding site is contributed by glutamine 169. The active-site Proton acceptor is the aspartate 315. Residues arginine 346 and arginine 388 each contribute to the phosphoenolpyruvate site.

This sequence belongs to the EPSP synthase family. Monomer.

It localises to the cytoplasm. The catalysed reaction is 3-phosphoshikimate + phosphoenolpyruvate = 5-O-(1-carboxyvinyl)-3-phosphoshikimate + phosphate. The protein operates within metabolic intermediate biosynthesis; chorismate biosynthesis; chorismate from D-erythrose 4-phosphate and phosphoenolpyruvate: step 6/7. Catalyzes the transfer of the enolpyruvyl moiety of phosphoenolpyruvate (PEP) to the 5-hydroxyl of shikimate-3-phosphate (S3P) to produce enolpyruvyl shikimate-3-phosphate and inorganic phosphate. In Pelotomaculum thermopropionicum (strain DSM 13744 / JCM 10971 / SI), this protein is 3-phosphoshikimate 1-carboxyvinyltransferase.